The chain runs to 103 residues: Small ribosomal subunit protein uS14c (103 aa).

A disordered region spans residues 34–56 (KVSPLSLSEKTKMREKLQSLPRN).

It belongs to the universal ribosomal protein uS14 family. In terms of assembly, part of the 30S ribosomal subunit.

The protein resides in the plastid. The protein localises to the chloroplast. Functionally, binds 16S rRNA, required for the assembly of 30S particles. The protein is Small ribosomal subunit protein uS14c of Triticum aestivum (Wheat).